A 440-amino-acid chain; its full sequence is Transposon Ty1-NL1 Gag polyprotein (440 aa).

Composition is skewed to polar residues over residues 1 to 23, 48 to 60, 71 to 86, and 131 to 152; these read MESQ…SVTS, TKAN…TPAS, SPQT…GPYQ, and PQYP…GNTF. 3 disordered regions span residues 1 to 86, 131 to 171, and 350 to 425; these read MESQ…GPYQ, PQYP…YVRP, and QQES…TEPI. The span at 153-165 shows a compositional bias: low complexity; sequence TDSSSADSDMTST. Positions 299–401 are RNA-binding; the sequence is NNGIPINNKV…NSQSRTARAH (103 aa). Over residues 363–372 the composition is skewed to basic and acidic residues; it reads NPSDEKKDSR. Over residues 373–412 the composition is skewed to polar residues; the sequence is TYTNTTKPKSITRNSQKPNNSQSRTARAHNVSTSNNSSGP.

In terms of assembly, homotrimer.

The protein resides in the cytoplasm. Capsid protein (CA) is the structural component of the virus-like particle (VLP), forming the shell that encapsulates the retrotransposons dimeric RNA genome. The particles are assembled from trimer-clustered units and there are holes in the capsid shells that allow for the diffusion of macromolecules. CA also has nucleocapsid-like chaperone activity, promoting primer tRNA(i)-Met annealing to the multipartite primer-binding site (PBS), dimerization of Ty1 RNA and initiation of reverse transcription. This is Transposon Ty1-NL1 Gag polyprotein (TY1A-NL1) from Saccharomyces cerevisiae (strain ATCC 204508 / S288c) (Baker's yeast).